Consider the following 244-residue polypeptide: Anti-H(O) lectin 1 (244 aa).

N-linked (GlcNAc...) asparagine glycosylation is found at asparagine 113 and asparagine 117. Mn(2+) contacts are provided by glutamate 127 and aspartate 129. 4 residues coordinate Ca(2+): aspartate 129, tyrosine 131, asparagine 137, and aspartate 142. The Mn(2+) site is built by aspartate 142 and histidine 145.

Belongs to the leguminous lectin family. In terms of assembly, homotetramer.

Functionally, di-N-acetylchitobiose-binding anti-H(O) lectin. The polypeptide is Anti-H(O) lectin 1 (Cytisophyllum sessilifolium (Sessile-leaved cytisus)).